A 423-amino-acid chain; its full sequence is Serine hydroxymethyltransferase (423 aa).

A (6S)-5,6,7,8-tetrahydrofolate-binding site is contributed by 121-123 (GHI). Residue lysine 227 is modified to N6-(pyridoxal phosphate)lysine. Glutamate 242 provides a ligand contact to (6S)-5,6,7,8-tetrahydrofolate.

The protein belongs to the SHMT family. In terms of assembly, homodimer. Pyridoxal 5'-phosphate is required as a cofactor.

The protein resides in the cytoplasm. The enzyme catalyses 5,10-methylenetetrahydromethanopterin + glycine + H2O = 5,6,7,8-tetrahydromethanopterin + L-serine. It participates in amino-acid biosynthesis; glycine biosynthesis; glycine from L-serine: step 1/1. In terms of biological role, catalyzes the reversible interconversion of serine and glycine with tetrahydromethanopterin (H4MPT) serving as the one-carbon carrier. Cannot use tetrahydrofolate (THF or H4PteGlu) instead of H4MPT as the pteridine substrate. Also probably exhibits a pteridine-independent aldolase activity toward beta-hydroxyamino acids, producing glycine and aldehydes, via a retro-aldol mechanism. The sequence is that of Serine hydroxymethyltransferase from Methanothermobacter thermautotrophicus (strain ATCC 29096 / DSM 1053 / JCM 10044 / NBRC 100330 / Delta H) (Methanobacterium thermoautotrophicum).